A 403-amino-acid chain; its full sequence is MLKIIDAKVIVTCPGRNFVTLKITTEDGITGVGDATLNGRELSVVSFLQDHMVPSLIGRDAHQIEDIWQFFYRGSYWRGGPVAMTALAAVDMALWDIKGKVAGLPVYQLLGGACRTGVTVYGHANGETIEDTIAEAVKYKAMGYKAIRLQTGVPGLASTYGVSKDKMFYEPADNDLPTENIWSTAKYLNSVPKLFERAREVLGWDVHLLHDVHHRLTPIEAARLGKDLEPYRLFWLEDSVPAENQAGFRLIRQHTTTPLAVGEIFAHVWDAKQLIEEQLIDYLRATVLHAGGITNLKKIAAFADLHHVKTGCHGATDLSPVTMAAALHFDMSITNFGLQEYMRHTPETDAVFPHAYTFSDGMLHPGDKPGLGVDIDEDLAAKHPYKRAYLPVNRLEDGTMFNW.

Residues Asn-38 and His-123 each coordinate substrate. The Proton donor/acceptor role is filled by Tyr-160. Asp-211 is a binding site for Mg(2+). The active-site Proton donor/acceptor is the His-213. 2 residues coordinate Mg(2+): Glu-237 and Glu-263. Substrate contacts are provided by Glu-263, Arg-284, His-313, Asp-317, and Glu-340.

It belongs to the mandelate racemase/muconate lactonizing enzyme family. GalD subfamily. It depends on Mg(2+) as a cofactor.

It carries out the reaction D-mannonate = 2-dehydro-3-deoxy-D-gluconate + H2O. It participates in carbohydrate metabolism; pentose and glucuronate interconversion. Catalyzes the dehydration of D-mannonate. Has no detectable activity with a panel of 70 other acid sugars (in vitro). This is D-mannonate dehydratase CC0532 from Caulobacter vibrioides (strain ATCC 19089 / CIP 103742 / CB 15) (Caulobacter crescentus).